The chain runs to 333 residues: Phosphate acyltransferase (333 aa).

The protein belongs to the PlsX family. As to quaternary structure, homodimer. Probably interacts with PlsY.

The protein resides in the cytoplasm. The catalysed reaction is a fatty acyl-[ACP] + phosphate = an acyl phosphate + holo-[ACP]. It functions in the pathway lipid metabolism; phospholipid metabolism. Its function is as follows. Catalyzes the reversible formation of acyl-phosphate (acyl-PO(4)) from acyl-[acyl-carrier-protein] (acyl-ACP). This enzyme utilizes acyl-ACP as fatty acyl donor, but not acyl-CoA. The chain is Phosphate acyltransferase from Lactobacillus acidophilus (strain ATCC 700396 / NCK56 / N2 / NCFM).